Reading from the N-terminus, the 448-residue chain is MNFENNSTIAAIATAYGVGSIAIVRISGPKSLSIAQKLSKKKDIQPRVAHLVTLYDDQSEPIDQAILIYFQAPKSFTGEDVVEFQCHGGVVVANMILQELLKAGARLANPGEFSKRAFFNGKIDLSEAEAIAKMIEAKSEDAAKILAKQIKGELKNYIENLREKLIRILAYVEVNIDYAEEDLPKDLQEQIEQQLNDIQEELQKIVASSKRRAGLIEGFKVAIIGKPNTGKSSLLNALLDYERAIVSDIAGTTRDTIEESVRIGTHLVRFVDTAGIREAHDTIEKIGIERSIQAIEESDIVIAMFDASKPLDAEDKKILELIESYKDQKEFIVVANKVDKGKHLDLSDFDALYMSVKKEITPLTQKLQKLLDSFANTEEIMLVTSRQIEAVTYALENINQARTPLQMGELEIFAFHINRVIESIGSITRPMQSSELLDKMFGEFCLGK.

(6S)-5-formyl-5,6,7,8-tetrahydrofolate is bound by residues arginine 25, glutamate 83, and lysine 122. Positions 218 to 372 (GFKVAIIGKP…LTQKLQKLLD (155 aa)) constitute a TrmE-type G domain. Asparagine 228 serves as a coordination point for K(+). Residues 228 to 233 (NTGKSS), 247 to 253 (SDIAGTT), and 272 to 275 (DTAG) contribute to the GTP site. Serine 232 is a Mg(2+) binding site. K(+) contacts are provided by serine 247, isoleucine 249, and threonine 252. Threonine 253 is a Mg(2+) binding site. Residue lysine 448 coordinates (6S)-5-formyl-5,6,7,8-tetrahydrofolate.

It belongs to the TRAFAC class TrmE-Era-EngA-EngB-Septin-like GTPase superfamily. TrmE GTPase family. As to quaternary structure, homodimer. Heterotetramer of two MnmE and two MnmG subunits. K(+) is required as a cofactor.

The protein resides in the cytoplasm. In terms of biological role, exhibits a very high intrinsic GTPase hydrolysis rate. Involved in the addition of a carboxymethylaminomethyl (cmnm) group at the wobble position (U34) of certain tRNAs, forming tRNA-cmnm(5)s(2)U34. In Nitratiruptor sp. (strain SB155-2), this protein is tRNA modification GTPase MnmE.